A 541-amino-acid chain; its full sequence is Tyrosine-protein phosphatase non-receptor type 5 (541 aa).

Residues 1 to 55 (MCCSERLLGLPQPVEMEAPDEAEGLPSKQKEMPPPPPPSPPSEPAQKLPPQGAGS) are disordered. Pro residues predominate over residues 32–43 (MPPPPPPSPPSE). A run of 2 helical transmembrane segments spans residues 64-84 (LCLF…LSGH) and 122-142 (LLLV…WHLL). At S221 the chain carries Phosphoserine; by PKA. A Phosphothreonine; by MAPK modification is found at T231. S244 is subject to Phosphoserine; by MAPK. The Tyrosine-protein phosphatase domain occupies 276 to 531 (LQAEFFEIPM…QFVHHAMSLY (256 aa)). Substrate contacts are provided by residues D437, 472–478 (CSAGIGR), and Q516. C472 (phosphocysteine intermediate) is an active-site residue.

Belongs to the protein-tyrosine phosphatase family. Non-receptor class subfamily. In terms of processing, phosphorylation at Ser-221 by PKA deactivates PTPN5. Phosphorylation at Thr-231 and Ser-244 by MAPKs stabilizes the phosphatase, dephosphorylation of these sites results in ubiquitin-mediated degradation of the active phosphatase. In terms of tissue distribution, STEP20 is expressed only in the CNS.

It localises to the endoplasmic reticulum membrane. The protein localises to the cytoplasm. The catalysed reaction is O-phospho-L-tyrosyl-[protein] + H2O = L-tyrosyl-[protein] + phosphate. Its function is as follows. May regulate the activity of several effector molecules involved in synaptic plasticity and neuronal cell survival, including MAPKs, Src family kinases and NMDA receptors. The protein is Tyrosine-protein phosphatase non-receptor type 5 (Ptpn5) of Mus musculus (Mouse).